Consider the following 65-residue polypeptide: Cell death protein rpr (65 aa).

In terms of assembly, interacts with Diap2 (via BIR2 domain).

Functionally, activator of apoptosis, as well as grim and hid, that acts on the effector Dredd. The sequence is that of Cell death protein rpr (rpr) from Drosophila melanogaster (Fruit fly).